A 276-amino-acid polypeptide reads, in one-letter code: Small ribosomal subunit protein uS3 (276 aa).

The KH type-2 domain occupies 39-110 (IRRETMKFLK…KINIKIKEIK (72 aa)).

It belongs to the universal ribosomal protein uS3 family. As to quaternary structure, part of the 30S ribosomal subunit. Forms a tight complex with proteins S10 and S14.

Binds the lower part of the 30S subunit head. Binds mRNA in the 70S ribosome, positioning it for translation. This Borrelia turicatae (strain 91E135) protein is Small ribosomal subunit protein uS3.